We begin with the raw amino-acid sequence, 524 residues long: Cytokinin dehydrogenase 7 (524 aa).

Residues 1 to 22 (MAARCSIAFMIMASCLSVVVSG) form the signal peptide. Asn-42 carries N-linked (GlcNAc...) asparagine glycosylation. An FAD-binding PCMH-type domain is found at 55–233 (VAAAPEAVLH…TRARIGLMPA (179 aa)). FAD-binding residues include Gly-91 and Gly-93. His-94 is subject to Pros-8alpha-FAD histidine. Residues Ser-95 and Gln-99 each contribute to the FAD site. A glycan (N-linked (GlcNAc...) asparagine) is linked at Asn-121. Positions 157, 162, 168, 172, and 223 each coordinate FAD. Asn-277 and Asn-320 each carry an N-linked (GlcNAc...) asparagine glycan. Residues Tyr-472, Ser-507, and Gln-510 each contribute to the FAD site.

Belongs to the oxygen-dependent FAD-linked oxidoreductase family. As to quaternary structure, monomer. FAD is required as a cofactor.

The protein localises to the secreted. It localises to the extracellular space. The enzyme catalyses N(6)-dimethylallyladenine + A + H2O = 3-methyl-2-butenal + adenine + AH2. Catalyzes the oxidation of cytokinins, a family of N(6)-substituted adenine derivatives that are plant hormones, where the substituent is an isopentenyl group. This Oryza sativa subsp. japonica (Rice) protein is Cytokinin dehydrogenase 7 (CKX7).